A 442-amino-acid polypeptide reads, in one-letter code: Coiled-coil domain-containing protein 112 (442 aa).

Coiled coils occupy residues 23 to 116 and 217 to 249; these read LEEL…RRIE and LEEK…VDTV. Disordered regions lie at residues 245 to 272, 289 to 312, and 392 to 442; these read KVDT…KKQK, KLAS…QRQS, and EKVE…RQGI. 2 stretches are compositionally biased toward basic and acidic residues: residues 256 to 268 and 294 to 310; these read KAED…EEQR and LREE…ERQR. Positions 281–400 form a coiled coil; it reads RKSLEMSAKL…KEKVENNVSR (120 aa).

It is found in the cytoplasm. Its subcellular location is the cytoskeleton. The protein resides in the microtubule organizing center. It localises to the centrosome. The protein localises to the centriolar satellite. The polypeptide is Coiled-coil domain-containing protein 112 (Ccdc112) (Mus musculus (Mouse)).